A 57-amino-acid polypeptide reads, in one-letter code: Large ribosomal subunit protein bL33 (57 aa).

Belongs to the bacterial ribosomal protein bL33 family.

In Shewanella denitrificans (strain OS217 / ATCC BAA-1090 / DSM 15013), this protein is Large ribosomal subunit protein bL33.